A 260-amino-acid polypeptide reads, in one-letter code: Snake venom serine protease homolog 2A (260 aa).

The signal sequence occupies residues 1–18 (MVLIRVLANLLILQLSYA). Positions 19–24 (QKSSEL) are excised as a propeptide. Positions 25 to 251 (IIGGDECNIN…HLDWIKSIIA (227 aa)) constitute a Peptidase S1 domain. 6 disulfides stabilise this stretch: Cys31/Cys165, Cys52/Cys68, Cys100/Cys258, Cys144/Cys212, Cys176/Cys191, and Cys202/Cys227. N-linked (GlcNAc...) asparagine glycosylation is found at Asn83, Asn123, and Asn124.

It belongs to the peptidase S1 family. Snake venom subfamily. As to expression, expressed by the venom gland.

It is found in the secreted. In terms of biological role, snake venom serine protease homolog that may act in the hemostasis system of the prey. This is Snake venom serine protease homolog 2A (TLG2A) from Craspedocephalus gramineus (Bamboo pit viper).